Here is a 606-residue protein sequence, read N- to C-terminus: Pyruvate decarboxylase 2 (606 aa).

Residues Asp-68 and His-155 each coordinate substrate. Positions 433-515 (DSWFNCQKLK…FLINNGGYTI (83 aa)) are thiamine pyrophosphate binding. Mg(2+) is bound by residues Asp-483, Asn-510, and Gly-512. Glu-516 is a binding site for substrate.

Belongs to the TPP enzyme family. In terms of assembly, homotetramer. It depends on a metal cation as a cofactor. Thiamine diphosphate is required as a cofactor.

The catalysed reaction is a 2-oxocarboxylate + H(+) = an aldehyde + CO2. This is Pyruvate decarboxylase 2 (PDC2) from Oryza sativa subsp. indica (Rice).